The following is a 137-amino-acid chain: Large ribosomal subunit protein bL12 (137 aa).

Belongs to the bacterial ribosomal protein bL12 family. In terms of assembly, homodimer. Part of the ribosomal stalk of the 50S ribosomal subunit. Forms a multimeric L10(L12)X complex, where L10 forms an elongated spine to which 2 to 4 L12 dimers bind in a sequential fashion. Binds GTP-bound translation factors.

In terms of biological role, forms part of the ribosomal stalk which helps the ribosome interact with GTP-bound translation factors. Is thus essential for accurate translation. The protein is Large ribosomal subunit protein bL12 of Synechococcus sp. (strain JA-3-3Ab) (Cyanobacteria bacterium Yellowstone A-Prime).